A 361-amino-acid polypeptide reads, in one-letter code: Probable pectinesterase 50 (361 aa).

A signal peptide spans 1–22; sequence MGYISMSVVAFLVVFASPVVLA. Residue glutamine 174 coordinates substrate. Aspartate 197 acts as the Proton donor in catalysis. Aspartate 218 acts as the Nucleophile in catalysis. 2 residues coordinate substrate: arginine 275 and tryptophan 277.

It belongs to the pectinesterase family. In terms of tissue distribution, expressed in flower buds.

The protein localises to the secreted. The protein resides in the cell wall. The enzyme catalyses [(1-&gt;4)-alpha-D-galacturonosyl methyl ester](n) + n H2O = [(1-&gt;4)-alpha-D-galacturonosyl](n) + n methanol + n H(+). Its pathway is glycan metabolism; pectin degradation; 2-dehydro-3-deoxy-D-gluconate from pectin: step 1/5. Functionally, acts in the modification of cell walls via demethylesterification of cell wall pectin. The sequence is that of Probable pectinesterase 50 (PME50) from Arabidopsis thaliana (Mouse-ear cress).